A 521-amino-acid polypeptide reads, in one-letter code: Anthranilate synthase component 1 (521 aa).

Residues T40 and 292–294 each bind L-tryptophan; that span reads PYM. Chorismate is bound at residue 329 to 330; sequence GT. E362 contributes to the Mg(2+) binding site. Residues Y450, R470, 484–486, and G486 each bind chorismate; that span reads GAG. E499 provides a ligand contact to Mg(2+).

It belongs to the anthranilate synthase component I family. Heterotetramer consisting of two non-identical subunits: a beta subunit (TrpG) and a large alpha subunit (TrpE). It depends on Mg(2+) as a cofactor.

The enzyme catalyses chorismate + L-glutamine = anthranilate + pyruvate + L-glutamate + H(+). It participates in amino-acid biosynthesis; L-tryptophan biosynthesis; L-tryptophan from chorismate: step 1/5. With respect to regulation, feedback inhibited by tryptophan. In terms of biological role, part of a heterotetrameric complex that catalyzes the two-step biosynthesis of anthranilate, an intermediate in the biosynthesis of L-tryptophan. In the first step, the glutamine-binding beta subunit (TrpG) of anthranilate synthase (AS) provides the glutamine amidotransferase activity which generates ammonia as a substrate that, along with chorismate, is used in the second step, catalyzed by the large alpha subunit of AS (TrpE) to produce anthranilate. In the absence of TrpG, TrpE can synthesize anthranilate directly from chorismate and high concentrations of ammonia. The polypeptide is Anthranilate synthase component 1 (trpE) (Buchnera aphidicola subsp. Acyrthosiphon pisum (strain APS) (Acyrthosiphon pisum symbiotic bacterium)).